Reading from the N-terminus, the 307-residue chain is Ribosomal RNA small subunit methyltransferase H (307 aa).

Residues 32–34 (GGH), aspartate 52, phenylalanine 78, aspartate 100, and glutamine 107 each bind S-adenosyl-L-methionine.

The protein belongs to the methyltransferase superfamily. RsmH family.

It is found in the cytoplasm. It catalyses the reaction cytidine(1402) in 16S rRNA + S-adenosyl-L-methionine = N(4)-methylcytidine(1402) in 16S rRNA + S-adenosyl-L-homocysteine + H(+). Functionally, specifically methylates the N4 position of cytidine in position 1402 (C1402) of 16S rRNA. This chain is Ribosomal RNA small subunit methyltransferase H, found in Coxiella burnetii (strain Dugway 5J108-111).